A 149-amino-acid chain; its full sequence is 3-dehydroquinate dehydratase (149 aa).

Tyrosine 26 acts as the Proton acceptor in catalysis. Substrate contacts are provided by asparagine 77, histidine 83, and aspartate 90. The Proton donor role is filled by histidine 103. Substrate is bound by residues 104 to 105 and arginine 114; that span reads LS.

This sequence belongs to the type-II 3-dehydroquinase family. In terms of assembly, homododecamer.

It carries out the reaction 3-dehydroquinate = 3-dehydroshikimate + H2O. The protein operates within metabolic intermediate biosynthesis; chorismate biosynthesis; chorismate from D-erythrose 4-phosphate and phosphoenolpyruvate: step 3/7. Functionally, catalyzes a trans-dehydration via an enolate intermediate. This chain is 3-dehydroquinate dehydratase, found in Aliivibrio salmonicida (strain LFI1238) (Vibrio salmonicida (strain LFI1238)).